Reading from the N-terminus, the 89-residue chain is UPF0213 protein LSEI_1587 (89 aa).

The region spanning K4–V79 is the GIY-YIG domain.

Belongs to the UPF0213 family.

This is UPF0213 protein LSEI_1587 from Lacticaseibacillus paracasei (strain ATCC 334 / BCRC 17002 / CCUG 31169 / CIP 107868 / KCTC 3260 / NRRL B-441) (Lactobacillus paracasei).